A 365-amino-acid chain; its full sequence is GTPase Obg (365 aa).

The Obg domain maps to 2 to 160 (ESFVDEVAIE…KFLRLSLKLL (159 aa)). The OBG-type G domain occupies 161 to 329 (ADVGIVGLPN…LLEAMDEAFF (169 aa)). Residues 167-174 (GLPNAGKS), 192-196 (FTTLS), 215-218 (DIPG), 282-285 (NKID), and 310-312 (SAD) contribute to the GTP site. Mg(2+)-binding residues include S174 and T194.

Belongs to the TRAFAC class OBG-HflX-like GTPase superfamily. OBG GTPase family. Monomer. The cofactor is Mg(2+).

Its subcellular location is the cytoplasm. Functionally, an essential GTPase which binds GTP, GDP and possibly (p)ppGpp with moderate affinity, with high nucleotide exchange rates and a fairly low GTP hydrolysis rate. Plays a role in control of the cell cycle, stress response, ribosome biogenesis and in those bacteria that undergo differentiation, in morphogenesis control. This Leptospira borgpetersenii serovar Hardjo-bovis (strain JB197) protein is GTPase Obg.